The sequence spans 34 residues: Photosystem II reaction center protein M (34 aa).

Residues 7–27 (GFIATILFVLVPTVFLLILYI) form a helical membrane-spanning segment.

Belongs to the PsbM family. In terms of assembly, PSII is composed of 1 copy each of membrane proteins PsbA, PsbB, PsbC, PsbD, PsbE, PsbF, PsbH, PsbI, PsbJ, PsbK, PsbL, PsbM, PsbT, PsbX, PsbY, PsbZ, Psb30/Ycf12, peripheral proteins PsbO, CyanoQ (PsbQ), PsbU, PsbV and a large number of cofactors. It forms dimeric complexes.

The protein localises to the cellular thylakoid membrane. Its function is as follows. One of the components of the core complex of photosystem II (PSII). PSII is a light-driven water:plastoquinone oxidoreductase that uses light energy to abstract electrons from H(2)O, generating O(2) and a proton gradient subsequently used for ATP formation. It consists of a core antenna complex that captures photons, and an electron transfer chain that converts photonic excitation into a charge separation. This subunit is found at the monomer-monomer interface. The sequence is that of Photosystem II reaction center protein M from Picosynechococcus sp. (strain ATCC 27264 / PCC 7002 / PR-6) (Agmenellum quadruplicatum).